The following is a 202-amino-acid chain: Lipid A acyltransferase PagP (202 aa).

An N-terminal signal peptide occupies residues 1-25; that stretch reads MNYKDIINACILSGVFLLHSPSALA. Active-site residues include His74, Asp117, and Ser118.

The protein belongs to the lipid A palmitoyltransferase family. In terms of assembly, homodimer.

It is found in the cell outer membrane. The enzyme catalyses a lipid A + a 1,2-diacyl-sn-glycero-3-phosphocholine = a hepta-acyl lipid A + a 2-acyl-sn-glycero-3-phosphocholine. It carries out the reaction a lipid IVA + a 1,2-diacyl-sn-glycero-3-phosphocholine = a lipid IVB + a 2-acyl-sn-glycero-3-phosphocholine. The catalysed reaction is a lipid IIA + a 1,2-diacyl-sn-glycero-3-phosphocholine = a lipid IIB + a 2-acyl-sn-glycero-3-phosphocholine. In terms of biological role, transfers a fatty acid residue from the sn-1 position of a phospholipid to the N-linked hydroxyfatty acid chain on the proximal unit of lipid A or its precursors. This is Lipid A acyltransferase PagP from Yersinia pseudotuberculosis serotype IB (strain PB1/+).